Reading from the N-terminus, the 637-residue chain is MSQTAAHLMERILQPAPEPFALLYRPESSGPGLLDVLIGEMSEPQVLADIDLPATSIGAPRLDVLALIPYRQIAERGFEAVDDESPLLAMNITEQQSISIERLLGMLPNVPIQLNSERFDLSDASYAEIVSQVIANEIGSGEGANFVIKRTFLAEISEYGPASALSFFRHLLEREKGAYWTFIIHTGSRTFVGASPERHISIKDGLSVMNPISGTYRYPPAGPNLSEVMDFLADRKEADELYMVVDEELKMMARICEDGGHVLGPYLKEMAHLAHTEYFIEGKTHRDVREILRETLFAPTVTGSPLESACRVIQRYEPQGRAYYSGMAALIGSDGKGGRSLDSAILIRTADIDNSGEVRISVGSTIVRHSDPMTEAAESRAKATGLISALKNQAPSRFGNHLQVRAALASRNAYVSDFWLMDSQQREQIQADFSGRQVLIVDAEDTFTSMIAKQLRALGLVVTVCSFSDEYSFEGYDLVIMGPGPGNPSEVQQPKINHLHVAIRSLLSQQRPFLAVCLSHQVLSLCLGLELQRKAIPNQGVQKQIDLFGNVERVGFYNTFAAQSSSDRLDIDGIGTVEISRDSETGEVHALRGPSFASMQFHAESLLTQEGPRIIADLLRHALIHTPVENNASAAGR.

The interval 1 to 434 (MSQTAAHLME…QREQIQADFS (434 aa)) is anthranilate synthase component I. The Glutamine amidotransferase type-1 domain maps to 437–628 (QVLIVDAEDT…LRHALIHTPV (192 aa)). Active-site for GATase activity residues include cysteine 517, histidine 602, and glutamate 604.

It carries out the reaction chorismate + L-glutamine = anthranilate + pyruvate + L-glutamate + H(+). Its pathway is antibiotic biosynthesis; phenazine biosynthesis. Functionally, involved in the biosynthesis of the antibiotic, phenazine, a nitrogen-containing heterocyclic molecule having important roles in virulence, competition and biological control. The protein is Anthranilate synthase, phenazine specific (phzB) of Pseudomonas chlororaphis (Pseudomonas aureofaciens).